The primary structure comprises 207 residues: Small ribosomal subunit protein uS4 (207 aa).

In terms of domain architecture, S4 RNA-binding spans 97–160; the sequence is SRLDNVVYRM…KKQARIVEAL (64 aa).

This sequence belongs to the universal ribosomal protein uS4 family. As to quaternary structure, part of the 30S ribosomal subunit. Contacts protein S5. The interaction surface between S4 and S5 is involved in control of translational fidelity.

Its function is as follows. One of the primary rRNA binding proteins, it binds directly to 16S rRNA where it nucleates assembly of the body of the 30S subunit. Functionally, with S5 and S12 plays an important role in translational accuracy. This is Small ribosomal subunit protein uS4 from Burkholderia pseudomallei (strain 1106a).